The following is a 416-amino-acid chain: Glutamyl-tRNA reductase (416 aa).

Substrate is bound by residues 46-49 (TCNR), Ser97, 102-104 (DHE), and Gln108. Catalysis depends on Cys47, which acts as the Nucleophile. 178 to 183 (GAGMAA) is an NADP(+) binding site.

This sequence belongs to the glutamyl-tRNA reductase family. Homodimer.

The enzyme catalyses (S)-4-amino-5-oxopentanoate + tRNA(Glu) + NADP(+) = L-glutamyl-tRNA(Glu) + NADPH + H(+). It participates in porphyrin-containing compound metabolism; protoporphyrin-IX biosynthesis; 5-aminolevulinate from L-glutamyl-tRNA(Glu): step 1/2. Catalyzes the NADPH-dependent reduction of glutamyl-tRNA(Glu) to glutamate 1-semialdehyde (GSA). The chain is Glutamyl-tRNA reductase from Aeropyrum pernix (strain ATCC 700893 / DSM 11879 / JCM 9820 / NBRC 100138 / K1).